The following is an 84-amino-acid chain: FCGSKPRCRPRCKPRCRSRSKKRCRRCRRRCSRIVKKCCRRRSKCCRRRRRCPCPCPRKKLRCCKRRPKRRCPKRKKKRCRRKC.

Intrachain disulfides connect Cys-16–Cys-24 and Cys-64–Cys-80.

In terms of assembly, cross-linked by interchain disulfide bonds around the DNA-helix. Testis.

The protein resides in the nucleus. It localises to the chromosome. Functionally, protamines substitute for histones in the chromatin of sperm during the haploid phase of spermatogenesis. They compact sperm DNA into a highly condensed, stable and inactive complex. This protamine condenses spermiogenic chromatin in a pattern which comprises fibers with a progressively larger diameter and lamellae that finally undergo definitive coalescence. This is Cysteine-rich protamine from Eledone cirrhosa (Curled octopus).